The sequence spans 491 residues: Cobyric acid synthase (491 aa).

Residues 251–444 form the GATase cobBQ-type domain; sequence GITIAVIRLP…LHGLFTNDEF (194 aa). Cys-329 serves as the catalytic Nucleophile. His-436 is an active-site residue.

It belongs to the CobB/CobQ family. CobQ subfamily.

The protein operates within cofactor biosynthesis; adenosylcobalamin biosynthesis. Functionally, catalyzes amidations at positions B, D, E, and G on adenosylcobyrinic A,C-diamide. NH(2) groups are provided by glutamine, and one molecule of ATP is hydrogenolyzed for each amidation. In Chloroflexus aggregans (strain MD-66 / DSM 9485), this protein is Cobyric acid synthase.